Here is a 554-residue protein sequence, read N- to C-terminus: Probable ATP-binding cassette sub-family F member 3 homolog (554 aa).

ABC transporter domains lie at 89-285 and 351-554; these read GDLH…ASAR and IEFV…GLGV. ATP-binding positions include 122–129 and 383–390; these read GRNGIGKT and GANGQGKS.

It belongs to the ABC transporter superfamily. ABCF family. EF3 subfamily.

This is Probable ATP-binding cassette sub-family F member 3 homolog from Encephalitozoon cuniculi (strain GB-M1) (Microsporidian parasite).